Here is a 1178-residue protein sequence, read N- to C-terminus: Niemann-Pick type C1-related protein (1178 aa).

N-linked (GlcNAc...) asparagine glycosylation occurs at asparagine 41. The next 2 helical transmembrane spans lie at 157–177 (PWLF…GIFL) and 412–432 (VVEW…TSVV). The SSD domain occupies 414–570 (EWLRLCAAVL…LTFFLAGLSL (157 aa)). Residue asparagine 433 is glycosylated (N-linked (GlcNAc...) asparagine). 4 helical membrane-spanning segments follow: residues 448 to 468 (GALA…LCGV), 478 to 498 (PFLA…AYSL), 516 to 536 (AGLS…IGAL), and 545 to 565 (FCII…TFFL). A glycan (N-linked (GlcNAc...) asparagine) is linked at asparagine 621. The helical transmembrane segment at 789-809 (ATVLVIFAAVTALAIYGATTL) threads the bilayer. Asparagine 917 and asparagine 943 each carry an N-linked (GlcNAc...) asparagine glycan. 5 helical membrane-spanning segments follow: residues 986-1006 (FTLT…LLLI), 1013-1033 (IIVV…MALI), 1037-1057 (LSMI…DFTI), 1080-1100 (IVMG…ILAL), and 1114-1134 (MMFM…PVVL).

Belongs to the patched family.

It is found in the inner membrane complex. The catalysed reaction is cholesterol(in) = cholesterol(out). Functionally, likely facilitates the efflux of cholesterol and gangliosides from membranes. Plays a role in the regulation of lipid homeostasis. The chain is Niemann-Pick type C1-related protein from Toxoplasma gondii (strain ATCC 50611 / Me49).